A 113-amino-acid polypeptide reads, in one-letter code: Flagellar hook-basal body complex protein FliE (113 aa).

Belongs to the FliE family.

The protein localises to the bacterial flagellum basal body. This is Flagellar hook-basal body complex protein FliE from Rhizobium etli (strain CIAT 652).